The sequence spans 1679 residues: Lysophospholipase NTE1 (1679 aa).

Residues 1–20 (MRSMNCTTNNTNNTGQNTKN) are compositionally biased toward low complexity. The segment at 1-21 (MRSMNCTTNNTNNTGQNTKNS) is disordered. Residues 1-49 (MRSMNCTTNNTNNTGQNTKNSLGSSFNSSNYTSYRFQTCLTDQIISEAQ) lie on the Cytoplasmic side of the membrane. The chain crosses the membrane as a helical span at residues 50–70 (TWSLSSLFNFSWVVSYFVMGA). The Lumenal segment spans residues 71–103 (SRMIFRYGWYLATLSLLRIPKWIFFKLHHVQFT). Residues 104–124 (LSFWLILFALAVIVFVTYTIM) form a helical membrane-spanning segment. At 125–1679 (KERILSQYKR…EFLLHRRNSI (1555 aa)) the chain is on the cytoplasmic side. Positions 261-274 (SDKDHGDETDHSDT) are enriched in basic and acidic residues. The disordered stretch occupies residues 261–304 (SDKDHGDETDHSDTDGLDDQDRDEEDEEEDDDIDNYDTKSCSSN). The span at 275–295 (DGLDDQDRDEEDEEEDDDIDN) shows a compositional bias: acidic residues. Residues S300 and S312 each carry the phosphoserine modification. Disordered regions lie at residues 498-527 (SSGS…KPSD) and 586-672 (DILS…VSPR). 2 stretches are compositionally biased toward polar residues: residues 592–606 (PIHN…GINT) and 630–652 (FSSL…LDNT). Residues S632, S634, S653, S661, S670, S680, and S739 each carry the phosphoserine modification. The interval 775–800 (KEYTISNKRHNKSKSQDKKKPRAYKE) is disordered. Over residues 788–800 (KSQDKKKPRAYKE) the composition is skewed to basic and acidic residues. Phosphothreonine is present on T803. A nucleoside 3',5'-cyclic phosphate contacts are provided by residues 803–947 (TPNL…LTKL) and 943–1074 (SLTK…VAKK). Residues 855 to 882 (SSSVVSSMSKPEQVSAQSSHKGENPHHT) form a disordered region. Positions 862–873 (MSKPEQVSAQSS) are enriched in polar residues. One can recognise a PNPLA domain in the interval 1373–1537 (LVLGGGGARG…VDNLPVTEMR (165 aa)). A GXGXXG motif is present at residues 1377-1382 (GGGARG). Residues 1404–1408 (GTSIG) carry the GXSXG motif. S1406 functions as the Nucleophile in the catalytic mechanism. D1524 serves as the catalytic Proton acceptor. Residues 1524 to 1526 (DGG) carry the DGA/G motif.

It belongs to the NTE family.

The protein localises to the endoplasmic reticulum membrane. The protein resides in the lipid droplet. It carries out the reaction a 1-acyl-sn-glycero-3-phosphocholine + H2O = sn-glycerol 3-phosphocholine + a fatty acid + H(+). It catalyses the reaction a 1,2-diacyl-sn-glycero-3-phosphocholine + 2 H2O = sn-glycerol 3-phosphocholine + 2 a carboxylate + 2 H(+). With respect to regulation, positively regulated by SEC14. Inhibited by organophosphorus esters in the order phenyl saligenin phosphate (PSP) &gt; phenyldipentyl phosphinate (PDPP) = diisopropyl fluorophosphate (DFP) &gt; and paraoxon (PXN). In terms of biological role, intracellular phospholipase B that catalyzes the double deacylation of phosphatidylcholine (PC) to glycerophosphocholine (GroPCho). Plays an important role in membrane lipid homeostasis. Responsible for the rapid PC turnover in response to inositol, elevated temperatures, or when choline is present in the growth medium. NTE1 activity impacts the repressing transcriptional activity of OPI1, the main regulator of phospholipid synthesis gene transcription. This is Lysophospholipase NTE1 (NTE1) from Saccharomyces cerevisiae (strain ATCC 204508 / S288c) (Baker's yeast).